Here is a 252-residue protein sequence, read N- to C-terminus: MERLLIVNADDFGLSKGQNYGIIEACRNGIVTSTTALVNGQAIDHAVQLSRDEPSLAIGMHFVLTMGKPLTAMPGLTRDGVLGKWIWQLAEEGALPLEEITQELASQYLRFIELFGRKPTHLDSHHHVHMFPQIFPIVAKFAAEEGIALRIDRQPLSNDGDLPANLRSSQGFSSAFYGEEISETLFLQVLDDSSHRGERSLEVMCHPAFVDNTIRQSAYCFPRLTELDVLTSASLKYAIAERGYLLGSYHDV.

Positions 61 and 125 each coordinate Mg(2+).

The protein belongs to the YdjC deacetylase family. ChbG subfamily. In terms of assembly, homodimer. Requires Mg(2+) as cofactor.

It is found in the cytoplasm. The enzyme catalyses N,N'-diacetylchitobiose + H2O = N-acetyl-beta-D-glucosaminyl-(1-&gt;4)-D-glucosamine + acetate. It catalyses the reaction diacetylchitobiose-6'-phosphate + H2O = N'-monoacetylchitobiose-6'-phosphate + acetate. The protein operates within glycan degradation; chitin degradation. Involved in the degradation of chitin. ChbG is essential for growth on the acetylated chitooligosaccharides chitobiose and chitotriose but is dispensable for growth on cellobiose and chitosan dimer, the deacetylated form of chitobiose. Deacetylation of chitobiose-6-P and chitotriose-6-P is necessary for both the activation of the chb promoter by the regulatory protein ChbR and the hydrolysis of phosphorylated beta-glucosides by the phospho-beta-glucosidase ChbF. Catalyzes the removal of only one acetyl group from chitobiose-6-P to yield monoacetylchitobiose-6-P, the inducer of ChbR and the substrate of ChbF. This is Chitooligosaccharide deacetylase from Escherichia coli O45:K1 (strain S88 / ExPEC).